Reading from the N-terminus, the 356-residue chain is Dihydroorotate dehydrogenase (quinone) (356 aa).

Residues 66–70 and Thr90 each bind FMN; that span reads AGFDK. Lys70 serves as a coordination point for substrate. Position 115 to 119 (115 to 119) interacts with substrate; that stretch reads NRMGF. 2 residues coordinate FMN: Asn143 and Asn176. Asn176 contacts substrate. Ser179 (nucleophile) is an active-site residue. Position 181 (Asn181) interacts with substrate. The FMN site is built by Lys212 and Thr240. 241–242 contacts substrate; the sequence is NT. FMN-binding positions include Gly266, Gly295, and 316–317; that span reads YT.

Belongs to the dihydroorotate dehydrogenase family. Type 2 subfamily. Monomer. Requires FMN as cofactor.

It localises to the cell membrane. The enzyme catalyses (S)-dihydroorotate + a quinone = orotate + a quinol. It participates in pyrimidine metabolism; UMP biosynthesis via de novo pathway; orotate from (S)-dihydroorotate (quinone route): step 1/1. In terms of biological role, catalyzes the conversion of dihydroorotate to orotate with quinone as electron acceptor. The sequence is that of Dihydroorotate dehydrogenase (quinone) from Rhodococcus erythropolis (strain PR4 / NBRC 100887).